A 512-amino-acid polypeptide reads, in one-letter code: Gamma-aminobutyric acid receptor subunit beta-2 (512 aa).

The signal sequence occupies residues 1–25 (MWRVRKRGYFGIWSFPLIIAAVCAQ). The Extracellular portion of the chain corresponds to 26–241 (SVNDPSNMSL…LSLSFKLKRN (216 aa)). 2 N-linked (GlcNAc...) asparagine glycosylation sites follow: Asn32 and Asn104. Tyr121 provides a ligand contact to histamine. Cysteines 160 and 174 form a disulfide. Asn173 carries an N-linked (GlcNAc...) asparagine glycan. Histamine is bound by residues 180–181 (SY) and Thr226. 4-aminobutanoate contacts are provided by Tyr181 and Thr226. The chain crosses the membrane as a helical span at residues 242–262 (IGYFILQTYMPSILITILSWV). The Cytoplasmic segment spans residues 263-272 (SFWINYDASA). The chain crosses the membrane as a helical span at residues 273–292 (ARVALGITTVLTMTTINTHL). Residues 293-310 (RETLPKIPYVKAIDMYLM) are Extracellular-facing. The chain crosses the membrane as a helical span at residues 311 to 331 (GCFVFVFMALLEYALVNYIFF). Topologically, residues 332-490 (GRGPQRQKKA…LTDVNAIDRW (159 aa)) are cytoplasmic. Position 441 is a phosphotyrosine (Tyr441). A helical transmembrane segment spans residues 491–511 (SRIFFPVVFSFFNIVYWLYYV). Residue Asn512 is a topological domain, extracellular.

It belongs to the ligand-gated ion channel (TC 1.A.9) family. Gamma-aminobutyric acid receptor (TC 1.A.9.5) subfamily. GABRB2 sub-subfamily. In terms of assembly, heteropentamer, formed by a combination of alpha (GABRA1-6), beta (GABRB1-3), gamma (GABRG1-3), delta (GABRD), epsilon (GABRE), rho (GABRR1-3), pi (GABRP) and theta (GABRQ) chains, each subunit exhibiting distinct physiological and pharmacological properties. Interacts with UBQLN1. May interact with KIF21B. Identified in a complex of 720 kDa composed of LHFPL4, NLGN2, GABRA1, GABRB2, GABRG2 and GABRB3. As to expression, isoform 1 and isoform 2 show reduced expression in schizophrenic brain. Isoform 3 shows increased expression in schizophrenic and bipolar disorder brains while isoform 4 shows reduced expression.

The protein resides in the postsynaptic cell membrane. It localises to the cell membrane. Its subcellular location is the cytoplasmic vesicle membrane. The catalysed reaction is chloride(in) = chloride(out). Allosterically activated by benzodiazepines. Allosterically activated by the anesthetic etomidate. Inhibited by the antagonist bicuculline. Potentiated by histamine. Its function is as follows. Beta subunit of the heteropentameric ligand-gated chloride channel gated by gamma-aminobutyric acid (GABA), a major inhibitory neurotransmitter in the brain. GABA-gated chloride channels, also named GABA(A) receptors (GABAAR), consist of five subunits arranged around a central pore and contain GABA active binding site(s) located at the alpha and beta subunit interface(s). When activated by GABA, GABAARs selectively allow the flow of chloride anions across the cell membrane down their electrochemical gradient. Chloride influx into the postsynaptic neuron following GABAAR opening decreases the neuron ability to generate a new action potential, thereby reducing nerve transmission. GABAARs containing alpha-1 and beta-2 or -3 subunits exhibit synaptogenic activity; the gamma-2 subunit being necessary but not sufficient to induce rapid synaptic contacts formation. Extrasynaptic beta-2 receptors contribute to the tonic GABAergic inhibition. Beta-containing GABAARs can simultaneously bind GABA and histamine where histamine binds at the interface of two neighboring beta subunits, which may be involved in the regulation of sleep and wakefulness. This chain is Gamma-aminobutyric acid receptor subunit beta-2, found in Homo sapiens (Human).